The following is a 307-amino-acid chain: UPF0276 protein PM0211 (307 aa).

Belongs to the UPF0276 family.

This Pasteurella multocida (strain Pm70) protein is UPF0276 protein PM0211.